The following is a 539-amino-acid chain: MGNNGLTPQELVAYGITDTVEVVHNPDYDMLFKEETQPGLAGYERGIVTESGAVAVDTGIFTGRSPKDKYLVRDETTRDTLWWSDQGKGKNDNQPLTQETWQSLKSLVTRQLSGKRLFVVDTWCGANPDSRLSVRFITEVAWQAHFVKNMFIRPDDASLASFKPDFVVMNGAKCTNPDWQSQGLHSENFVAFNLTEKIQLIGGTWYGGEMKKGLFAIMNYLLPLKGIASMHCSANVGADGDVAVFFGLSGTGKTTLSTDPQRQLIGDDEHGWDDDGVFNFEGGCYAKTIKLSPQAEPEIYQAIRRDALLENVVVRHDGSVDYDDGSKTENTRVSYPIYHIDNIVKPVSKAGHAKKVIFLTADAFGVLPPVSRLTADQTQYHFLSGFTAKLAGTERGVTEPTPTFSACFGAAFLTLHPTQYAEVLVKRMQAAGAEAWLVNTGWNGSGKRISLKETRAIINAILSGEIAHAQTSTLPIFNLEMPDSLPGVDGKLLDPRNSYPSEAAWEEKARALAQRFITNFDKFTDTPAGEALVQAGPKL.

The substrate site is built by R64, Y206, and K212. ATP is bound by residues K212, H231, and 247–255 (GLSGTGKTT). The Mn(2+) site is built by K212 and H231. D268 is a Mn(2+) binding site. Residues E296, R332, 448-449 (RI), and T454 each bind ATP. Substrate is bound at residue R332.

The protein belongs to the phosphoenolpyruvate carboxykinase (ATP) family. As to quaternary structure, monomer. It depends on Mn(2+) as a cofactor.

Its subcellular location is the cytoplasm. The catalysed reaction is oxaloacetate + ATP = phosphoenolpyruvate + ADP + CO2. Its pathway is carbohydrate biosynthesis; gluconeogenesis. Involved in the gluconeogenesis. Catalyzes the conversion of oxaloacetate (OAA) to phosphoenolpyruvate (PEP) through direct phosphoryl transfer between the nucleoside triphosphate and OAA. The chain is Phosphoenolpyruvate carboxykinase (ATP) from Erwinia tasmaniensis (strain DSM 17950 / CFBP 7177 / CIP 109463 / NCPPB 4357 / Et1/99).